A 120-amino-acid chain; its full sequence is Immunoglobulin kappa variable 2-29 (120 aa).

An N-terminal signal peptide occupies residues 1–20 (MRLPAQLLGLLMLWIPGSSA). The segment at 21 to 43 (DIVMTQTPLSLSVTPGQPASISC) is framework-1. The Ig-like domain maps to 21-120 (DIVMTQTPLS…YYCMQGIHLP (100 aa)). Cysteines 43 and 113 form a disulfide. The complementarity-determining-1 stretch occupies residues 44–59 (KSSQSLLHSDGKTYLY). The framework-2 stretch occupies residues 60–74 (WYLQKPGQSPQLLIY). The segment at 75–81 (EVSSRFS) is complementarity-determining-2. Positions 82–113 (GVPDRFSGSGSGTDFTLKISRVEAEDVGVYYC) are framework-3. Positions 114 to 120 (MQGIHLP) are complementarity-determining-3.

Immunoglobulins are composed of two identical heavy chains and two identical light chains; disulfide-linked.

It is found in the secreted. Its subcellular location is the cell membrane. Functionally, v region of the variable domain of immunoglobulin light chains that participates in the antigen recognition. Immunoglobulins, also known as antibodies, are membrane-bound or secreted glycoproteins produced by B lymphocytes. In the recognition phase of humoral immunity, the membrane-bound immunoglobulins serve as receptors which, upon binding of a specific antigen, trigger the clonal expansion and differentiation of B lymphocytes into immunoglobulins-secreting plasma cells. Secreted immunoglobulins mediate the effector phase of humoral immunity, which results in the elimination of bound antigens. The antigen binding site is formed by the variable domain of one heavy chain, together with that of its associated light chain. Thus, each immunoglobulin has two antigen binding sites with remarkable affinity for a particular antigen. The variable domains are assembled by a process called V-(D)-J rearrangement and can then be subjected to somatic hypermutations which, after exposure to antigen and selection, allow affinity maturation for a particular antigen. This chain is Immunoglobulin kappa variable 2-29, found in Homo sapiens (Human).